The chain runs to 643 residues: DNA polymerase III subunit tau (643 aa).

An ATP-binding site is contributed by 45–52 (GTRGVGKT). 4 residues coordinate Zn(2+): Cys-64, Cys-73, Cys-76, and Cys-79. Residues 385-404 (TPTQVPPQPQSAPQQAPTVP) form a disordered region.

It belongs to the DnaX/STICHEL family. In terms of assembly, the DNA polymerase III holoenzyme complex contains at least 10 different subunits organized into 3 functionally essential subassemblies: the Pol III core, the beta sliding clamp processivity factor and the clamp-loading complex. The Pol III core (subunits alpha, epsilon and theta) contains the polymerase and the 3'-5' exonuclease proofreading activities. The polymerase is tethered to the template via the dimeric beta sliding clamp processivity factor. The clamp-loading complex (also called gamma complex) assembles the beta sliding clamp onto the primed template and plays a central role in the organization and communication at the replication fork. The clamp-loading complex contains delta, delta', psi and chi, and 3 copies of either or both of two different DnaX proteins, gamma and tau. The DNA replisome complex has a single clamp loader (3 tau and 1 each of delta, delta', psi and chi subunits) which binds 3 Pol III cores (1 core on the leading strand and 2 on the lagging strand) each with a beta sliding clamp dimer. Additional proteins in the replisome are other copies of gamma, psi and chi, Ssb, DNA helicase and RNA primase. The clamp loader hydrolyzes ATP to assemble the beta processivity factor onto the primed template and plays a central role in the organization and communication at the replication fork; the minimal complex to load the beta sliding clamp on DNA is delta, delta', gamma.

It carries out the reaction DNA(n) + a 2'-deoxyribonucleoside 5'-triphosphate = DNA(n+1) + diphosphate. Functionally, part of the beta sliding clamp loading complex, which hydrolyzes ATP to load the beta clamp onto primed DNA to form the DNA replication pre-initiation complex. DNA polymerase III is a complex, multichain enzyme responsible for most of the replicative synthesis in bacteria. This DNA polymerase also exhibits 3'-5' exonuclease activity. The gamma complex (gamma(3),delta,delta') is thought to load beta dimers onto DNA by binding ATP which alters the complex's conformation so it can bind beta sliding clamp dimers and open them at one interface. Primed DNA is recognized, ATP is hydrolyzed releasing the gamma complex and closing the beta sliding clamp ring around the primed DNA. In terms of biological role, serves as a scaffold to trimerize the core complex. Its function is as follows. Interacts with the delta and delta' subunits to transfer the beta subunit on the DNA. Interacts with ATP, drives ATP-induced conformational changes in the gamma complex that opens the beta sliding clamp ring. After loading of primed DNA ATP is hydrolyzed and the beta sliding clamp ring closes. The polypeptide is DNA polymerase III subunit tau (dnaX) (Escherichia coli (strain K12)).